Here is a 116-residue protein sequence, read N- to C-terminus: Large ribosomal subunit protein uL18 (116 aa).

This sequence belongs to the universal ribosomal protein uL18 family. As to quaternary structure, part of the 50S ribosomal subunit; part of the 5S rRNA/L5/L18/L25 subcomplex. Contacts the 5S and 23S rRNAs.

This is one of the proteins that bind and probably mediate the attachment of the 5S RNA into the large ribosomal subunit, where it forms part of the central protuberance. The protein is Large ribosomal subunit protein uL18 of Shewanella halifaxensis (strain HAW-EB4).